A 296-amino-acid polypeptide reads, in one-letter code: Phosphatidylglycerol--prolipoprotein diacylglyceryl transferase (296 aa).

4 helical membrane passes run 28–48 (WYGLCFSLGILFASLLGIYLA), 72–92 (FALYSLLFIIPGSRIAYILFY), 110–130 (GGLASHGGMLGLILWALIFSW), and 139–159 (LTFLFLCDLCASVFGCAAFMI). Position 160 (Arg160) interacts with a 1,2-diacyl-sn-glycero-3-phospho-(1'-sn-glycerol). The next 3 helical transmembrane spans lie at 197–217 (VQLYEGMSYLLLSIILFFLSY), 226–246 (GWVTSLGLVGISLIRFFAEFF), and 263–283 (GQILSFPLFVFGLCLGIACFL).

The protein belongs to the Lgt family.

It is found in the cell inner membrane. It catalyses the reaction L-cysteinyl-[prolipoprotein] + a 1,2-diacyl-sn-glycero-3-phospho-(1'-sn-glycerol) = an S-1,2-diacyl-sn-glyceryl-L-cysteinyl-[prolipoprotein] + sn-glycerol 1-phosphate + H(+). It participates in protein modification; lipoprotein biosynthesis (diacylglyceryl transfer). Catalyzes the transfer of the diacylglyceryl group from phosphatidylglycerol to the sulfhydryl group of the N-terminal cysteine of a prolipoprotein, the first step in the formation of mature lipoproteins. This Chlamydia caviae (strain ATCC VR-813 / DSM 19441 / 03DC25 / GPIC) (Chlamydophila caviae) protein is Phosphatidylglycerol--prolipoprotein diacylglyceryl transferase.